The primary structure comprises 415 residues: Phosphoglycerate kinase (415 aa).

Substrate contacts are provided by residues 24–26 (DLN), arginine 39, 62–65 (HLGR), arginine 121, and arginine 161. Residues lysine 211, glycine 307, glutamate 338, and 367-370 (GGDS) each bind ATP.

It belongs to the phosphoglycerate kinase family. Monomer.

It is found in the cytoplasm. It catalyses the reaction (2R)-3-phosphoglycerate + ATP = (2R)-3-phospho-glyceroyl phosphate + ADP. Its pathway is carbohydrate degradation; glycolysis; pyruvate from D-glyceraldehyde 3-phosphate: step 2/5. In Micrococcus luteus (strain ATCC 4698 / DSM 20030 / JCM 1464 / CCM 169 / CCUG 5858 / IAM 1056 / NBRC 3333 / NCIMB 9278 / NCTC 2665 / VKM Ac-2230) (Micrococcus lysodeikticus), this protein is Phosphoglycerate kinase.